We begin with the raw amino-acid sequence, 193 residues long: dCTP deaminase (193 aa).

Residues 110-115 (RSSLAR), Asp-128, 136-138 (VLE), Tyr-171, Lys-178, and Gln-182 each bind dCTP. Glu-138 (proton donor/acceptor) is an active-site residue.

The protein belongs to the dCTP deaminase family. As to quaternary structure, homotrimer.

The catalysed reaction is dCTP + H2O + H(+) = dUTP + NH4(+). Its pathway is pyrimidine metabolism; dUMP biosynthesis; dUMP from dCTP (dUTP route): step 1/2. Its function is as follows. Catalyzes the deamination of dCTP to dUTP. This Buchnera aphidicola subsp. Schizaphis graminum (strain Sg) protein is dCTP deaminase.